The primary structure comprises 201 residues: ATP-dependent Clp protease proteolytic subunit 1 (201 aa).

S102 acts as the Nucleophile in catalysis. The active site involves H127.

It belongs to the peptidase S14 family. In terms of assembly, fourteen ClpP subunits assemble into 2 heptameric rings which stack back to back to give a disk-like structure with a central cavity, resembling the structure of eukaryotic proteasomes.

The protein resides in the cytoplasm. The catalysed reaction is Hydrolysis of proteins to small peptides in the presence of ATP and magnesium. alpha-casein is the usual test substrate. In the absence of ATP, only oligopeptides shorter than five residues are hydrolyzed (such as succinyl-Leu-Tyr-|-NHMec, and Leu-Tyr-Leu-|-Tyr-Trp, in which cleavage of the -Tyr-|-Leu- and -Tyr-|-Trp bonds also occurs).. Functionally, cleaves peptides in various proteins in a process that requires ATP hydrolysis. Has a chymotrypsin-like activity. Plays a major role in the degradation of misfolded proteins. The chain is ATP-dependent Clp protease proteolytic subunit 1 from Mesorhizobium japonicum (strain LMG 29417 / CECT 9101 / MAFF 303099) (Mesorhizobium loti (strain MAFF 303099)).